A 180-amino-acid chain; its full sequence is Large ribosomal subunit protein uL5 (180 aa).

It belongs to the universal ribosomal protein uL5 family. As to quaternary structure, part of the 50S ribosomal subunit; part of the 5S rRNA/L5/L18/L25 subcomplex. Contacts the 5S rRNA and the P site tRNA. Forms a bridge to the 30S subunit in the 70S ribosome.

Its function is as follows. This is one of the proteins that bind and probably mediate the attachment of the 5S RNA into the large ribosomal subunit, where it forms part of the central protuberance. In the 70S ribosome it contacts protein S13 of the 30S subunit (bridge B1b), connecting the 2 subunits; this bridge is implicated in subunit movement. Contacts the P site tRNA; the 5S rRNA and some of its associated proteins might help stabilize positioning of ribosome-bound tRNAs. The polypeptide is Large ribosomal subunit protein uL5 (Clostridium botulinum (strain Loch Maree / Type A3)).